Here is a 152-residue protein sequence, read N- to C-terminus: MVRTTASFGTSSSFVLRLGQTLFSSASLLFMCFNDDEDFYAYTTFCYLVTVMGLVTPWSVTLALMEAYSILVKKLPMQATVISVIVAGDFVLSFLSLGGACSTASVAVLLMDAGEKQCDRYKLSATMAFLSSFLSFASTFFNFCLLPSLMSH.

Residues 1–12 (MVRTTASFGTSS) are Cytoplasmic-facing. Residues 13–33 (SFVLRLGQTLFSSASLLFMCF) form a helical membrane-spanning segment. The Extracellular segment spans residues 34–44 (NDDEDFYAYTT). A helical transmembrane segment spans residues 45 to 65 (FCYLVTVMGLVTPWSVTLALM). Over 66–80 (EAYSILVKKLPMQAT) the chain is Cytoplasmic. Residues 81-101 (VISVIVAGDFVLSFLSLGGAC) traverse the membrane as a helical segment. Residues 102–126 (STASVAVLLMDAGEKQCDRYKLSAT) lie on the Extracellular side of the membrane. Residues 127 to 147 (MAFLSSFLSFASTFFNFCLLP) traverse the membrane as a helical segment. At 148–152 (SLMSH) the chain is on the cytoplasmic side.

Belongs to the Casparian strip membrane proteins (CASP) family. Homodimer and heterodimers.

The protein resides in the cell membrane. The protein is CASP-like protein 5C1 of Arabidopsis thaliana (Mouse-ear cress).